Here is a 349-residue protein sequence, read N- to C-terminus: MVLAELNWLYGQPEATGILKASPEDFIVCEDLGFSPDGEGEHLMVHIRKTGCNTQFVADSLARFAGIPSRSVSYAGLKDRHAVTEQWFCLHLPGKQEPDFASFQLEGCEILTTARQKRKLRIGALKGNSFTLILREISHHQLVENRLRLIQQGGVPNYFGEQRFGRDGQNLIQAQRWANNEIRVKERSKRSFYLSASRSAMFNAVASARIALKQQQQVIKGDALQLTGRGSWFVADETELPLLQQRVIDGELQITAPLPGDGELGTQHQAADFERQYLQPYESLWELIKRERVEGCRRAILVQPQNLSWQWQDNDTVKISFWLPAGSFATSVVREIINQDQNNVTNIVE.

A substrate-binding site is contributed by Phe-26. Catalysis depends on Asp-79, which acts as the Nucleophile. Asn-128 is a substrate binding site. The TRUD domain occupies 154-302 (GVPNYFGEQR…VEGCRRAILV (149 aa)). Phe-328 is a binding site for substrate.

Belongs to the pseudouridine synthase TruD family.

It carries out the reaction uridine(13) in tRNA = pseudouridine(13) in tRNA. In terms of biological role, responsible for synthesis of pseudouridine from uracil-13 in transfer RNAs. This Photorhabdus laumondii subsp. laumondii (strain DSM 15139 / CIP 105565 / TT01) (Photorhabdus luminescens subsp. laumondii) protein is tRNA pseudouridine synthase D.